We begin with the raw amino-acid sequence, 254 residues long: 5-oxoprolinase subunit A (254 aa).

It belongs to the LamB/PxpA family. In terms of assembly, forms a complex composed of PxpA, PxpB and PxpC.

It carries out the reaction 5-oxo-L-proline + ATP + 2 H2O = L-glutamate + ADP + phosphate + H(+). Its function is as follows. Catalyzes the cleavage of 5-oxoproline to form L-glutamate coupled to the hydrolysis of ATP to ADP and inorganic phosphate. The sequence is that of 5-oxoprolinase subunit A from Burkholderia vietnamiensis (strain G4 / LMG 22486) (Burkholderia cepacia (strain R1808)).